The sequence spans 435 residues: BAHD acyltransferase BIA1 (435 aa).

Active-site proton acceptor residues include His151 and Asp369.

The protein belongs to the plant acyltransferase family. In terms of tissue distribution, mostly expressed in roots (particularly in the root elongation zone), and, to a lower extent, in seedling, leaves (especially in hydathodes), siliques (e.g. in developing seeds) and flowers.

Its subcellular location is the cytoplasm. In terms of biological role, monitors brassinosteroids (BR) responses and homeostasis, particularly in the root and hypocotyl in darkness. Promotes flavonoid biosynthesis. The chain is BAHD acyltransferase BIA1 from Arabidopsis thaliana (Mouse-ear cress).